A 251-amino-acid polypeptide reads, in one-letter code: Probable transcriptional regulatory protein DehaBAV1_0421 (251 aa).

It belongs to the TACO1 family.

Its subcellular location is the cytoplasm. This chain is Probable transcriptional regulatory protein DehaBAV1_0421, found in Dehalococcoides mccartyi (strain ATCC BAA-2100 / JCM 16839 / KCTC 5957 / BAV1).